Consider the following 729-residue polypeptide: Transcriptional activator ptaB (729 aa).

The span at 1-12 (MPQHPGLPPGHP) shows a compositional bias: pro residues. Disordered stretches follow at residues 1 to 69 (MPQH…QAHA), 207 to 341 (AAAA…QNQA), 505 to 538 (LELSEQKQSPKVSKNLGKRAQQKQAQQAAPSLPE), and 614 to 729 (RGPQ…KGTA). Positions 38–56 (PGGPQVTQGGPMMGMPPGA) are enriched in low complexity. The segment covering 272–285 (APQPHPTPNPPPQQ) has biased composition (pro residues). Low complexity-rich tracts occupy residues 286-300 (LPQAQQPGQQPHQQP) and 307-341 (QPQQQQSQQGQPQGQQQQMTPQEAQMKAQQTQNQA). Positions 614 to 625 (RGPQMNGPNQFA) are enriched in polar residues. Low complexity predominate over residues 655–671 (GPPGMVQQGQMQPNVGQ). Polar residues predominate over residues 672–682 (ATSASASPQVT).

The protein belongs to the MFG1 family. As to quaternary structure, interacts with somA.

It is found in the nucleus. Its function is as follows. Transcriptional regulator that forms a complex with somA to control biofilm formation. The sequence is that of Transcriptional activator ptaB from Aspergillus fumigatus (strain ATCC MYA-4609 / CBS 101355 / FGSC A1100 / Af293) (Neosartorya fumigata).